Here is a 34-residue protein sequence, read N- to C-terminus: Kappa-theraphotoxin-Scg1a (34 aa).

Intrachain disulfides connect Cys2–Cys16, Cys9–Cys21, and Cys15–Cys28. The tract at residues 4–6 (YLF) is involved in active face.

Belongs to the neurotoxin 10 (Hwtx-1) family. 09 (HaTx) subfamily. In terms of tissue distribution, expressed by the venom gland.

The protein resides in the secreted. Functionally, reversibly inhibits potassium currents in oocytes expressing Kv2.1/KCNB1 channels (Kd=2.7 uM). Acts by shifting activation of the channel to more depolarized voltages. The toxin may bind to the S3b-S4 helices of the voltage sensor paddle. One, two, three or four toxin molecules may bind the Kv2.1/KCNB1 channel. It shows low to moderate affinity for lipid bilayers. It partitions into the bilayer membrane, where it stabilizes at the water/membrane interface. In Stromatopelma calceatum griseipes (Feather leg baboon tarantula), this protein is Kappa-theraphotoxin-Scg1a.